Consider the following 256-residue polypeptide: Capsid protein (256 aa).

The Bipartite nuclear localization signal motif lies at 3–20; the sequence is KRPADIIISTPGSKVRRR. The Nuclear localization signal motif lies at 40 to 54; sequence KRQSWTNRPINRKPR. The segment at 68-85 is a zinc-finger region; that stretch reads CEGPCKVQSFESRHDVVH. The Nuclear export signal motif lies at 101–122; it reads LTHRVGKRFCVKSIYILGKIWM. A Bipartite nuclear localization signal motif is present at residues 200-247; the sequence is RRFFRVNNYVVYNQQEAGKYENHTENALMLYMACTHASNPVYATLKIR.

Belongs to the geminiviridae capsid protein family. In terms of assembly, homomultimer. Binds to single-stranded and double-stranded viral DNA. Interacts (via nuclear localization signals) with host importin alpha-1a.

It is found in the virion. It localises to the host nucleus. Functionally, encapsidates the viral DNA into characteristic twinned ('geminate') particles. Binds the genomic viral ssDNA and shuttles it into and out of the cell nucleus. The CP of bipartite geminiviruses is not required for cell-to-cell or systemic movement. This is Capsid protein from Manihot esculenta (Cassava).